Consider the following 511-residue polypeptide: Spermatogenesis-associated protein 2 (511 aa).

Residues 77-149 (ALHCAFSMLE…AYKLKELVES (73 aa)) form the PUB domain. The PIM motif signature appears at 320–337 (TYFPTQDDVDLYTDSEPR).

This sequence belongs to the SPATA2 family. In terms of assembly, interacts (via the PIM motif) with RNF31/HOIP (via the PUB domain); the interaction is direct. Interacts (via the PUB domain) with CYLD; the interaction is direct. In terms of tissue distribution, expressed in the testis and to a lesser extent in the brain, while skeletal muscle and kidney show weak expression.

Its subcellular location is the cytoplasm. It localises to the nucleus. In terms of biological role, bridging factor that mediates the recruitment of CYLD to the LUBAC complex, thereby regulating TNF-alpha-induced necroptosis. Acts as a direct binding intermediate that bridges RNF31/HOIP, the catalytic subunit of the LUBAC complex, and the deubiquitinase (CYLD), thereby recruiting CYLD to the TNF-R1 signaling complex (TNF-RSC). Required to activate the 'Met-1'- (linear) and 'Lys-63'-linked deubiquitinase activities of CYLD. Controls the kinase activity of RIPK1 and TNF-alpha-induced necroptosis by promoting 'Met-1'-linked deubiquitination of RIPK1 by CYLD. This chain is Spermatogenesis-associated protein 2, found in Rattus norvegicus (Rat).